We begin with the raw amino-acid sequence, 1948 residues long: Chromodomain-helicase-DNA-binding protein 5 (1948 aa).

Disordered regions lie at residues 1–136, 228–268, and 281–336; these read MRGP…SGQL, SPQQ…GRGK, and SKRK…GDGY. 2 stretches are compositionally biased toward acidic residues: residues 17 to 37 and 71 to 89; these read EEME…EGFE and NDEL…ESEG. Composition is skewed to basic residues over residues 95 to 114 and 250 to 268; these read TKKK…KRKK and GVRK…GRGK. Positions 289-299 are enriched in acidic residues; the sequence is SEEDEPEDSDL. Basic residues predominate over residues 319–328; it reads KKNKRRRKKK. 2 consecutive PHD-type zinc fingers follow at residues 341–388 and 414–461; these read QDYC…CEKE and MEFC…CTCP. A histone-binding region spans residues 341-651; it reads QDYCEVCQQG…HRELMLGEDA (311 aa). The Chromo 1 domain maps to 495 to 552; that stretch reads MPPPRPLEGIPEREFFVKWAGLSYWHCSWVKELQLELYHTVMYRNYQRKNDMDEPPPF. Residues 547–569 form a disordered region; the sequence is DEPPPFDYGSGDEDGKSEKRKNK. Residues 559-569 are compositionally biased toward basic and acidic residues; the sequence is EDGKSEKRKNK. The Chromo 2 domain maps to 590-651; it reads MMVHRILNHS…HRELMLGEDA (62 aa). Residues 710–894 enclose the Helicase ATP-binding domain; that stretch reads RFSWAQGTDT…FHLLNFLTPE (185 aa). 723–730 contacts ATP; it reads DEMGLGKT. The DEAH box signature appears at 845–848; that stretch reads DEAH. A Helicase C-terminal domain is found at 1026 to 1191; that stretch reads LLQKMLKKLR…MTKQELDDIL (166 aa). Disordered regions lie at residues 1206-1250, 1349-1409, 1521-1566, and 1595-1692; these read MMSQ…VEDS, YNDA…LPPL, KYST…LPDK, and TALD…EDKN. Acidic residues-rich tracts occupy residues 1353–1364 and 1374–1383; these read SQEDQEWQDELS and SEDEDEDFEE. Gln1388 is modified (N5-methylglutamine). The segment covering 1547-1561 has biased composition (pro residues); that stretch reads TPVPASPAQLPPAPL. At Ser1552 the chain carries Phosphoserine. Composition is skewed to basic and acidic residues over residues 1598–1625, 1633–1650, and 1657–1672; these read DRVE…EVEK, PLKE…DKLE, and NDFR…KEPT.

This sequence belongs to the SNF2/RAD54 helicase family. Component of the nucleosome remodeling and deacetylase (NuRD) repressor complex, composed of core proteins MTA1, MTA2, MTA3, RBBP4, RBBP7, HDAC1, HDAC2, MBD2, MBD3, and peripherally associated proteins CDK2AP1, CDK2AP2, GATAD2A, GATAD2B, CHD3, CHD4 and CHD5. The exact stoichiometry of the NuRD complex is unknown, and some subunits such as MBD2 and MBD3, GATAD2A and GATAD2B, and CHD3, CHD4 and CHD5 define mutually exclusive NuRD complexes. Interacts with HDAC2. In terms of processing, methylated at Gln-1388 by N6AMT1. In terms of tissue distribution, expressed in brain regions enriched in neurons and not in regions rich in glial cells (at protein level).

It is found in the nucleus. Its subcellular location is the chromosome. It carries out the reaction ATP + H2O = ADP + phosphate + H(+). Its function is as follows. ATP-dependent chromatin-remodeling factor that binds DNA through histones and regulates gene transcription. May specifically recognize and bind trimethylated 'Lys-27' (H3K27me3) and non-methylated 'Lys-4' of histone H3. Acts as a component of the histone deacetylase NuRD complex which participates in the remodeling of chromatin. Plays a role in the development of the nervous system by activating the expression of genes promoting neuron terminal differentiation. In parallel, it may also positively regulate the trimethylation of histone H3 at 'Lys-27' thereby specifically repressing genes that promote the differentiation into non-neuronal cell lineages. Regulates the expression of genes involved in cell proliferation and differentiation. Downstream activated genes may include CDKN2A that positively regulates the p53/TP53 pathway, which in turn, prevents cell proliferation. In spermatogenesis, it probably regulates histone hyperacetylation and the replacement of histones by transition proteins in chromatin, a crucial step in the condensation of spermatid chromatin and the production of functional spermatozoa. The protein is Chromodomain-helicase-DNA-binding protein 5 (Chd5) of Rattus norvegicus (Rat).